The chain runs to 732 residues: Photosystem I P700 chlorophyll a apoprotein A1 (732 aa).

The next 8 helical transmembrane spans lie at 61–84 (VFSS…FHGA), 145–168 (LKYA…FHMH), 185–209 (NAGQ…HIAL), 278–296 (IASH…GIIA), 317–340 (WHSR…HHIY), 356–382 (LSLF…IFMI), 414–436 (IIMG…IYIH), and 510–528 (FMVH…LILM). Cys552 and Cys561 together coordinate [4Fe-4S] cluster. The next 2 membrane-spanning stretches (helical) occupy residues 568-589 (HVFL…HFFW) and 644-666 (LSGY…MFLW). A chlorophyll a'-binding site is contributed by His655. Chlorophyll a-binding residues include Met663 and Tyr671. Trp672 is a phylloquinone binding site. The helical transmembrane segment at 704–724 (AVGLVHYMLGGIGTTWAFFLA) threads the bilayer.

It belongs to the PsaA/PsaB family. As to quaternary structure, the PsaA/B heterodimer binds the P700 chlorophyll special pair and subsequent electron acceptors. PSI consists of a core antenna complex that captures photons, and an electron transfer chain that converts photonic excitation into a charge separation. The eukaryotic PSI reaction center is composed of at least 11 subunits. It depends on P700 is a chlorophyll a/chlorophyll a' dimer, A0 is one or more chlorophyll a, A1 is one or both phylloquinones and FX is a shared 4Fe-4S iron-sulfur center. as a cofactor.

It is found in the plastid. The protein localises to the chloroplast thylakoid membrane. It carries out the reaction reduced [plastocyanin] + hnu + oxidized [2Fe-2S]-[ferredoxin] = oxidized [plastocyanin] + reduced [2Fe-2S]-[ferredoxin]. Functionally, psaA and PsaB bind P700, the primary electron donor of photosystem I (PSI), as well as the electron acceptors A0, A1 and FX. PSI is a plastocyanin/cytochrome c6-ferredoxin oxidoreductase, converting photonic excitation into a charge separation, which transfers an electron from the donor P700 chlorophyll pair to the spectroscopically characterized acceptors A0, A1, FX, FA and FB in turn. Oxidized P700 is reduced on the lumenal side of the thylakoid membrane by plastocyanin or cytochrome c6. This Heterocapsa triquetra (Dinoflagellate) protein is Photosystem I P700 chlorophyll a apoprotein A1.